The following is a 1436-amino-acid chain: ABC transporter C family member 15 (1436 aa).

Transmembrane regions (helical) follow at residues 8 to 28 (IINK…IYLY), 129 to 149 (YIAT…PLIL), 165 to 185 (IYIG…NMAS), 238 to 258 (FFQY…IQIL), 261 to 281 (LGFL…VMLI), 349 to 369 (IIYW…VLVS), and 373 to 393 (TYTL…ITIL). The ABC transmembrane type-1 1 domain maps to 128–412 (NYIATGLFVF…LPDCLHKFIS (285 aa)). The 224-residue stretch at 543 to 766 (ADYQDLLSIN…IDFEMILKEK (224 aa)) folds into the ABC transporter 1 domain. 575-582 (GGVRSGKT) is an ATP binding site. An ABC transmembrane type-1 2 domain is found at 865-1155 (KKYIRMGSSI…FMRQFGELES (291 aa)). 6 helical membrane-spanning segments follow: residues 873-893 (SISF…ILLL), 919-939 (LIYL…YLLI), 985-1005 (IDIL…CLVT), 1017-1039 (IAIP…NYSV), 1101-1121 (IGIR…LFSI), and 1127-1147 (GLSA…NWFM). Residues 1193 to 1426 (IEFKNVEIRY…STSRFSKLIK (234 aa)) enclose the ABC transporter 2 domain. 1227–1234 (GRSGSGKS) provides a ligand contact to ATP.

Belongs to the ABC transporter superfamily. ABCC family. Conjugate transporter (TC 3.A.1.208) subfamily.

Its subcellular location is the membrane. This Dictyostelium discoideum (Social amoeba) protein is ABC transporter C family member 15 (abcC15).